A 608-amino-acid chain; its full sequence is Glutamine--fructose-6-phosphate aminotransferase [isomerizing] (608 aa).

The active-site Nucleophile; for GATase activity is the Cys-2. A Glutamine amidotransferase type-2 domain is found at 2–218 (CGICGIVGHQ…DGDWCELTPD (217 aa)). 2 SIS domains span residues 284–423 (MPFD…ARGT) and 456–598 (MAAV…VDQP). Residue Lys-603 is the For Fru-6P isomerization activity of the active site.

Homodimer.

It localises to the cytoplasm. It carries out the reaction D-fructose 6-phosphate + L-glutamine = D-glucosamine 6-phosphate + L-glutamate. Its function is as follows. Catalyzes the first step in hexosamine metabolism, converting fructose-6P into glucosamine-6P using glutamine as a nitrogen source. The sequence is that of Glutamine--fructose-6-phosphate aminotransferase [isomerizing] from Gluconobacter oxydans (strain 621H) (Gluconobacter suboxydans).